Reading from the N-terminus, the 250-residue chain is ATP synthase subunit a (250 aa).

5 helical membrane-spanning segments follow: residues 27–47, 86–106, 129–149, 191–211, and 219–239; these read TDTV…AFYL, FVLP…WLAV, INYV…AGIW, IFAG…IMWA, and FDLF…ILYF.

Belongs to the ATPase A chain family. As to quaternary structure, F-type ATPases have 2 components, CF(1) - the catalytic core - and CF(0) - the membrane proton channel. CF(1) has five subunits: alpha(3), beta(3), gamma(1), delta(1), epsilon(1). CF(0) has three main subunits: a(1), b(2) and c(9-12). The alpha and beta chains form an alternating ring which encloses part of the gamma chain. CF(1) is attached to CF(0) by a central stalk formed by the gamma and epsilon chains, while a peripheral stalk is formed by the delta and b chains.

It localises to the cell membrane. Functionally, key component of the proton channel; it plays a direct role in the translocation of protons across the membrane. The protein is ATP synthase subunit a of Mycobacterium bovis (strain ATCC BAA-935 / AF2122/97).